A 111-amino-acid polypeptide reads, in one-letter code: Integration host factor subunit alpha (111 aa).

It belongs to the bacterial histone-like protein family. In terms of assembly, heterodimer of an alpha and a beta chain.

This protein is one of the two subunits of integration host factor, a specific DNA-binding protein that functions in genetic recombination as well as in transcriptional and translational control. The protein is Integration host factor subunit alpha of Chelativorans sp. (strain BNC1).